Consider the following 442-residue polypeptide: tRNA modification GTPase MnmE (442 aa).

Positions 27, 84, and 124 each coordinate (6S)-5-formyl-5,6,7,8-tetrahydrofolate. A TrmE-type G domain is found at 221–366; that stretch reads GLHVVIVGAP…LLDALQAFAE (146 aa). Residues 231–236, 250–256, and 275–278 each bind GTP; these read NAGKSS, SKEAGTT, and DTAG. Mg(2+) contacts are provided by Ser235 and Thr256. A (6S)-5-formyl-5,6,7,8-tetrahydrofolate-binding site is contributed by Lys442.

It belongs to the TRAFAC class TrmE-Era-EngA-EngB-Septin-like GTPase superfamily. TrmE GTPase family. As to quaternary structure, homodimer. Heterotetramer of two MnmE and two MnmG subunits. K(+) is required as a cofactor.

Its subcellular location is the cytoplasm. Exhibits a very high intrinsic GTPase hydrolysis rate. Involved in the addition of a carboxymethylaminomethyl (cmnm) group at the wobble position (U34) of certain tRNAs, forming tRNA-cmnm(5)s(2)U34. This chain is tRNA modification GTPase MnmE, found in Brucella suis biovar 1 (strain 1330).